Reading from the N-terminus, the 510-residue chain is Archaeosine synthase subunit alpha (510 aa).

One can recognise a PUA domain in the interval 427 to 510 (LGKFTINKAS…LKKGIAVKVR (84 aa)).

This sequence belongs to the archaeosine synthase type 1 family. As to quaternary structure, forms a robust complex with the archaeosine synthase beta subunit RaSEA, likely an alpha(2)beta(2) heterotetrameric structure. Formation of this complex highly increases lysine transfer activity.

It carries out the reaction 7-cyano-7-carbaguanosine(15) in tRNA + L-lysine = 7-N-[(5S)-5-amino-5-carboxypentyl]formamidino-7-deazaguanosine(15) in tRNA. It participates in tRNA modification; archaeosine-tRNA biosynthesis. Functions in the biosynthesis of archaeosine, a modified nucleoside present in the dihydrouridine loop (D-loop) of archaeal tRNAs. Catalyzes the addition of L-lysine to the cyano group of 7-cyano-7-deazaguanine (preQ0)-modified tRNAs at position 15, to generate q0kN15-tRNA, a q0N lysine adduct identified as 7-N-[(5S)-5-amino-5-carboxypentyl]formamidino-7-deazaguanosine. This Thermoplasma acidophilum (strain ATCC 25905 / DSM 1728 / JCM 9062 / NBRC 15155 / AMRC-C165) protein is Archaeosine synthase subunit alpha.